Here is a 105-residue protein sequence, read N- to C-terminus: Nucleoid-associated protein PTH_0052 (105 aa).

Belongs to the YbaB/EbfC family. As to quaternary structure, homodimer.

Its subcellular location is the cytoplasm. The protein resides in the nucleoid. In terms of biological role, binds to DNA and alters its conformation. May be involved in regulation of gene expression, nucleoid organization and DNA protection. The sequence is that of Nucleoid-associated protein PTH_0052 from Pelotomaculum thermopropionicum (strain DSM 13744 / JCM 10971 / SI).